Here is a 485-residue protein sequence, read N- to C-terminus: MATNPLSILFVASEVEGLIKSGGLADVAKALPEALVNLQHDARIAIPAYTAIPDVCDDEVILDTHLETWPHTHYQVKKRFLGDNPVYLIACGHYFDRPSMYAENNQAYTDNGERFAFFSAACLDMLPKIGFQPDIVHANDWHTGLVPFLLKHRYGQDPFFAQTKSILSIHNAVFKGVFHYDEMQCLPEFHCRNVPDAAVSSTHMTMLKAGVMNADKINAVSPTYAEELKTELGSHGMAWEFQQRAGDLVGILNGCDYSAWHPDTDSYLPINYKATKQSMVRGKNGCKRALQEQVGLPIKDVAMFGMVCRLTHQKGVHYLLPVLTEFLKLDVQLVLVGTGDPLLAAQLRDVAAQFGEKFVFVEAYNNQLAHLVEAASDFFLMPSEFEPCGLNQIYSMAYGSLPIVRGVGGLKDSVCDYDVNPETATGFVFYEPTAQALLITMQRALLLYAQNLTELRRVQLYAMERDFCWNKAAEQYVELYRSALK.

Position 20 (Lys-20) interacts with ADP-alpha-D-glucose.

This sequence belongs to the glycosyltransferase 1 family. Bacterial/plant glycogen synthase subfamily.

The enzyme catalyses [(1-&gt;4)-alpha-D-glucosyl](n) + ADP-alpha-D-glucose = [(1-&gt;4)-alpha-D-glucosyl](n+1) + ADP + H(+). The protein operates within glycan biosynthesis; glycogen biosynthesis. In terms of biological role, synthesizes alpha-1,4-glucan chains using ADP-glucose. This chain is Glycogen synthase, found in Vibrio vulnificus (strain CMCP6).